The sequence spans 295 residues: Small ribosomal subunit protein uS2 (295 aa).

The segment at 261–295 (QAKKFSKTKNIDEETNTEFEQVLNDADENKNSDNA) is disordered.

It belongs to the universal ribosomal protein uS2 family.

The sequence is that of Small ribosomal subunit protein uS2 from Rickettsia rickettsii (strain Sheila Smith).